Consider the following 465-residue polypeptide: FAD-dependent monooxygenase pyr5 (465 aa).

The N-terminal stretch at 1-16 is a signal peptide; it reads MRVLIIGGSIAGLTLA. FAD contacts are provided by Glu-30, Gly-44, and Arg-103. Tyr-210 is a catalytic residue. The FAD site is built by Asp-306 and Ala-319. A helical transmembrane segment spans residues 440–456; that stretch reads PTFPLTVAGLCLVAIVI.

It belongs to the paxM FAD-dependent monooxygenase family. FAD is required as a cofactor.

It is found in the membrane. The catalysed reaction is 4-hydroxy-3-[(2E,6E)-farnesyl]-6-(pyridin-3-yl)-2H-pyran-2-one + NADPH + O2 + H(+) = 2-oxo-3-[(8S)-epoxy-(2E,6E)-farnesyl]-6-(pyridin-3-yl)-2H-pyran-4-olate + NADP(+) + H2O. Its pathway is secondary metabolite biosynthesis; terpenoid biosynthesis. Functionally, FAD-dependent monooxygenase; part of the gene cluster that mediates the biosynthesis of pyripyropene A, a specific human acyl-coenzyme A:cholesterol acyltransferase 2 inhibitor. The first step of the pathway is the synthesis of nicotinyl-CoA from nicotinic acid by the nicotinic acid-CoA ligase pyr1. Nicotinyl-CoA is then a substrate of polyketide synthase pyr2 to produce 4-hydroxy-6-(3-pyridinyl)-2H-pyran-2-one (HPPO) which is further prenylated by the polyprenyl transferase pyr6 to yield farnesyl-HPPO. The next steps consist of an epoxidation of farnesyl-HPPO to epoxyfarnesyl-HPPO by FAD-dependent monooxygenase pyr5 and a cyclization of the terpenoid portion by the terpene cyclase pyr4 to yield deacetyl-pyripyropene E. The 2 cytochrome P450 monooxygenases pyr3 and pyr9, and the 2 acetyltransferases pyr7 and pyr8 are involved in the conversion of deacetyl-pyripyropene E into pyripyropene A through several cycles of oxidation and acetylation steps. Pyr7 acetylates deacetyl-pyripyropene E to pyripyropene E which is oxidized to 11-deacetyl-pyripyropene O by pyr3, which is in turn acetylated into pyripyropene O by pyr8. Pyripyropene O is then oxidized to deacetyl-pyripyropene A by pyr9. Deacetyl-pyripyropene A is finally acetylated to pyripyropene A by pyr8. The sequence is that of FAD-dependent monooxygenase pyr5 from Aspergillus fumigatus (strain ATCC MYA-4609 / CBS 101355 / FGSC A1100 / Af293) (Neosartorya fumigata).